A 200-amino-acid chain; its full sequence is Signal peptidase complex catalytic subunit SEC11 (200 aa).

Over 1 to 15 the chain is Cytoplasmic; it reads MFAELAPYLSNPRQT. The chain crosses the membrane as a helical; Signal-anchor for type II membrane protein span at residues 16 to 33; that stretch reads LAQILNFALVLSTAFMGW. The Lumenal segment spans residues 34-200; that stretch reads KALSVYTNSS…MGVMVMLQRE (167 aa). N-linked (GlcNAc...) asparagine glycosylation is present at N41. Active-site charge relay system residues include S53 and H92. The disordered stretch occupies residues 101-131; it reads GDGGKKSQRRLEKEADKRSGPGLSSPISHQM. Over residues 103 to 119 the composition is skewed to basic and acidic residues; the sequence is GGKKSQRRLEKEADKRS. D142 serves as the catalytic Charge relay system. The interval 186 to 197 is C-terminal short (CTS) helix; that stretch reads VLLGIMGVMVML.

Belongs to the peptidase S26B family. In terms of assembly, component of the signal peptidase complex (SPC) composed of a catalytic subunit SEC11 and three accessory subunits SPC1, SPC2 and SPC3. The complex induces a local thinning of the ER membrane which is used to measure the length of the signal peptide (SP) h-region of protein substrates. This ensures the selectivity of the complex towards h-regions shorter than 18-20 amino acids. SPC associates with the translocon complex.

It localises to the endoplasmic reticulum membrane. It catalyses the reaction Cleavage of hydrophobic, N-terminal signal or leader sequences from secreted and periplasmic proteins.. Its function is as follows. Catalytic component of the signal peptidase complex (SPC) which catalyzes the cleavage of N-terminal signal sequences from nascent proteins as they are translocated into the lumen of the endoplasmic reticulum. Specifically cleaves N-terminal signal peptides that contain a hydrophobic alpha-helix (h-region) shorter than 18-20 amino acids. This chain is Signal peptidase complex catalytic subunit SEC11 (SEC11), found in Arthroderma gypseum (strain ATCC MYA-4604 / CBS 118893) (Microsporum gypseum).